The chain runs to 610 residues: UvrABC system protein C (610 aa).

Residues 13-91 (HLPGVYRMYD…IKENQPKYNV (79 aa)) form the GIY-YIG domain. The 36-residue stretch at 201–236 (GQVIEHLVQKMENAAQELDFEAAARFRDQIQSVRAV) folds into the UVR domain.

The protein belongs to the UvrC family. As to quaternary structure, interacts with UvrB in an incision complex.

The protein localises to the cytoplasm. The UvrABC repair system catalyzes the recognition and processing of DNA lesions. UvrC both incises the 5' and 3' sides of the lesion. The N-terminal half is responsible for the 3' incision and the C-terminal half is responsible for the 5' incision. In Actinobacillus pleuropneumoniae serotype 3 (strain JL03), this protein is UvrABC system protein C.